The following is a 348-amino-acid chain: Phosphate acyltransferase (348 aa).

This sequence belongs to the PlsX family. As to quaternary structure, homodimer. Probably interacts with PlsY.

It is found in the cytoplasm. It carries out the reaction a fatty acyl-[ACP] + phosphate = an acyl phosphate + holo-[ACP]. Its pathway is lipid metabolism; phospholipid metabolism. Its function is as follows. Catalyzes the reversible formation of acyl-phosphate (acyl-PO(4)) from acyl-[acyl-carrier-protein] (acyl-ACP). This enzyme utilizes acyl-ACP as fatty acyl donor, but not acyl-CoA. The sequence is that of Phosphate acyltransferase from Pectobacterium carotovorum subsp. carotovorum (strain PC1).